A 181-amino-acid chain; its full sequence is CAPA peptides (181 aa).

Positions 1-22 (MQDNRFFILMILLVFSTSLNQG) are cleaved as a signal peptide. A propeptide spanning residues 23 to 29 (QKLKAND) is cleaved from the precursor. An Isoleucine amide modification is found at isoleucine 41. The propeptide occupies 44–54 (NSEISSFSRSE). Isoleucine 65 bears the Isoleucine amide mark. The propeptide occupies 68 to 181 (SDVSSFDNLN…ENERDTANFL (114 aa)). The segment at 159–181 (TQGQGGYTPRLGRENERDTANFL) is disordered. Over residues 169 to 181 (LGRENERDTANFL) the composition is skewed to basic and acidic residues.

In terms of processing, a pyrokinin potentially constituted by residues Asn-158 to Gly-170 has so far not been detected and might be completely absent in ants. Periviscerokinin 1 and 2 are expressed in central brain, antennal lobes and gnathal, thoracic and abominal ganglia. Periviscerokinin 2 is also expressed in the retrocerebral complex (at protein level).

It is found in the secreted. Periviscerokinins mediate visceral muscle contractile activity (myotropic activity). This chain is CAPA peptides, found in Camponotus floridanus (Florida carpenter ant).